A 177-amino-acid polypeptide reads, in one-letter code: Large ribosomal subunit protein uL6 (177 aa).

The protein belongs to the universal ribosomal protein uL6 family. In terms of assembly, part of the 50S ribosomal subunit.

In terms of biological role, this protein binds to the 23S rRNA, and is important in its secondary structure. It is located near the subunit interface in the base of the L7/L12 stalk, and near the tRNA binding site of the peptidyltransferase center. The polypeptide is Large ribosomal subunit protein uL6 (Cupriavidus necator (strain ATCC 17699 / DSM 428 / KCTC 22496 / NCIMB 10442 / H16 / Stanier 337) (Ralstonia eutropha)).